The chain runs to 131 residues: Holo-[acyl-carrier-protein] synthase (131 aa).

D8 and E58 together coordinate Mg(2+).

Belongs to the P-Pant transferase superfamily. AcpS family. It depends on Mg(2+) as a cofactor.

The protein localises to the cytoplasm. The enzyme catalyses apo-[ACP] + CoA = holo-[ACP] + adenosine 3',5'-bisphosphate + H(+). Functionally, transfers the 4'-phosphopantetheine moiety from coenzyme A to a Ser of acyl-carrier-protein. The chain is Holo-[acyl-carrier-protein] synthase from Oenococcus oeni (strain ATCC BAA-331 / PSU-1).